The chain runs to 155 residues: Endoribonuclease YbeY (155 aa).

Positions 120, 124, and 130 each coordinate Zn(2+).

This sequence belongs to the endoribonuclease YbeY family. The cofactor is Zn(2+).

Its subcellular location is the cytoplasm. Single strand-specific metallo-endoribonuclease involved in late-stage 70S ribosome quality control and in maturation of the 3' terminus of the 16S rRNA. This is Endoribonuclease YbeY from Borreliella burgdorferi (strain ATCC 35210 / DSM 4680 / CIP 102532 / B31) (Borrelia burgdorferi).